The following is a 199-amino-acid chain: uncharacterized protein (199 aa).

The region spanning 38–169 (NRRAAVLIPI…SLDIHREGIN (132 aa)) is the Nudix hydrolase domain. The Nudix box motif lies at 76–98 (GKADPDDQSLISTALREAEEEVA). Mg(2+) is bound by residues Glu-92 and Glu-96.

This sequence belongs to the Nudix hydrolase family. PCD1 subfamily. Requires Mn(2+) as cofactor. It depends on Mg(2+) as a cofactor.

Probably mediates the hydrolysis of some nucleoside diphosphate derivatives. This is an uncharacterized protein from Yersinia pseudotuberculosis serotype I (strain IP32953).